Reading from the N-terminus, the 446-residue chain is Cytochrome P450 monooxygenase ATR14 (446 aa).

The tract at residues 403–446 is disordered; the sequence is NFTYPDEFRPDRWLDDRDQKEYEHDHGDAMQPFSVGPRDCPSQK. The segment covering 408-430 has biased composition (basic and acidic residues); sequence DEFRPDRWLDDRDQKEYEHDHGD. Residue C442 coordinates heme.

It belongs to the cytochrome P450 family. It depends on heme as a cofactor.

Its pathway is mycotoxin biosynthesis. In terms of biological role, cytochrome P450 monooxygenase; part of the core atranone cluster (CAC) which products are predicted to catalyze most or all steps of mycotoxin atranone synthesis, starting from geranylgeranyl pyrophosphate (GGPP). The initial cyclization of GGPP to dolabellane is probably performed by the terpene cyclase ATR13. The Baeyer-Villiger oxidation near the end of the atranone synthesis, which converts atranones D and E to atranones F and G is predicted to be catalyzed by the monooxygenase ATR8. Of the CAC's other predicted gene products, the reducing PKS ATR6 might synthesize a polyketide chain. This polyketide is probably transferred onto the atranone backbone by the polyketide transferase ATR5. Other predicted CAC products include 4 oxygenases (ATR2, ATR3, ATR4, and ATR14), 3 short-chain reductases (ATR7, ATR9, and ATR10), and a methyltransferase (ATR12). These may all be involved in the various steps of atranone biosynthesis, although their specific roles must await experimental determination. The chain is Cytochrome P450 monooxygenase ATR14 from Stachybotrys chlorohalonatus (strain IBT 40285).